The following is a 32-amino-acid chain: CSNLSTCVLGKLSQELHKLQTYPRTDVGAGTP.

A disulfide bond links C1 and C7. Position 32 is a proline amide (P32).

The protein belongs to the calcitonin family.

The protein resides in the secreted. In terms of biological role, causes a rapid but short-lived drop in the level of calcium and phosphate in blood by promoting the incorporation of those ions in the bones. This Anguilla japonica (Japanese eel) protein is Calcitonin.